We begin with the raw amino-acid sequence, 210 residues long: 3-hexulose-6-phosphate synthase (210 aa).

Belongs to the HPS/KGPDC family. HPS subfamily.

It carries out the reaction D-ribulose 5-phosphate + formaldehyde = D-arabino-hex-3-ulose 6-phosphate. It functions in the pathway one-carbon metabolism; formaldehyde assimilation via RuMP pathway; D-fructose 6-phosphate from D-ribulose 5-phosphate and formaldehyde: step 1/2. Functionally, catalyzes the condensation of ribulose 5-phosphate with formaldehyde to form 3-hexulose 6-phosphate. The sequence is that of 3-hexulose-6-phosphate synthase from Staphylococcus haemolyticus (strain JCSC1435).